We begin with the raw amino-acid sequence, 273 residues long: Thymidylate synthase (273 aa).

Arginine 31 contributes to the dUMP binding site. Histidine 61 serves as a coordination point for (6R)-5,10-methylene-5,6,7,8-tetrahydrofolate. Residue arginine 136–arginine 137 coordinates dUMP. Cysteine 156 (nucleophile) is an active-site residue. Residues arginine 176–aspartate 179, asparagine 187, and histidine 217–tyrosine 219 each bind dUMP. Residue aspartate 179 participates in (6R)-5,10-methylene-5,6,7,8-tetrahydrofolate binding. Alanine 272 provides a ligand contact to (6R)-5,10-methylene-5,6,7,8-tetrahydrofolate.

This sequence belongs to the thymidylate synthase family. Bacterial-type ThyA subfamily. Homodimer.

It is found in the cytoplasm. It catalyses the reaction dUMP + (6R)-5,10-methylene-5,6,7,8-tetrahydrofolate = 7,8-dihydrofolate + dTMP. It participates in pyrimidine metabolism; dTTP biosynthesis. Catalyzes the reductive methylation of 2'-deoxyuridine-5'-monophosphate (dUMP) to 2'-deoxythymidine-5'-monophosphate (dTMP) while utilizing 5,10-methylenetetrahydrofolate (mTHF) as the methyl donor and reductant in the reaction, yielding dihydrofolate (DHF) as a by-product. This enzymatic reaction provides an intracellular de novo source of dTMP, an essential precursor for DNA biosynthesis. In Corynebacterium jeikeium (strain K411), this protein is Thymidylate synthase.